A 147-amino-acid chain; its full sequence is Ribonuclease H (147 aa).

The 142-residue stretch at 1-142 folds into the RNase H type-1 domain; the sequence is MKKVSIYTDG…CDKLATDEIK (142 aa). The Mg(2+) site is built by aspartate 9, glutamate 47, aspartate 69, and aspartate 134.

The protein belongs to the RNase H family. Monomer. It depends on Mg(2+) as a cofactor.

The protein localises to the cytoplasm. It catalyses the reaction Endonucleolytic cleavage to 5'-phosphomonoester.. Functionally, endonuclease that specifically degrades the RNA of RNA-DNA hybrids. The sequence is that of Ribonuclease H from Acetivibrio thermocellus (strain ATCC 27405 / DSM 1237 / JCM 9322 / NBRC 103400 / NCIMB 10682 / NRRL B-4536 / VPI 7372) (Clostridium thermocellum).